The sequence spans 396 residues: Cysteine desulfurase (396 aa).

Pyridoxal 5'-phosphate-binding positions include 71 to 72 (GT), N148, Q176, and 196 to 198 (SGH). N6-(pyridoxal phosphate)lysine is present on K199. T231 contributes to the pyridoxal 5'-phosphate binding site. The active-site Cysteine persulfide intermediate is the C319. C319 contacts [2Fe-2S] cluster.

This sequence belongs to the class-V pyridoxal-phosphate-dependent aminotransferase family. NifS/IscS subfamily. Homodimer. Pyridoxal 5'-phosphate is required as a cofactor.

It catalyses the reaction (sulfur carrier)-H + L-cysteine = (sulfur carrier)-SH + L-alanine. In terms of biological role, catalyzes the removal of elemental sulfur atoms from cysteine to produce alanine. Seems to participate in the biosynthesis of the nitrogenase metalloclusters by providing the inorganic sulfur required for the Fe-S core formation. The chain is Cysteine desulfurase from Azotobacter chroococcum mcd 1.